A 273-amino-acid polypeptide reads, in one-letter code: Elongation factor Ts (273 aa).

Positions 80 to 83 (TDFV) are involved in Mg(2+) ion dislocation from EF-Tu.

It belongs to the EF-Ts family.

The protein localises to the cytoplasm. Associates with the EF-Tu.GDP complex and induces the exchange of GDP to GTP. It remains bound to the aminoacyl-tRNA.EF-Tu.GTP complex up to the GTP hydrolysis stage on the ribosome. The polypeptide is Elongation factor Ts (Tropheryma whipplei (strain Twist) (Whipple's bacillus)).